Consider the following 324-residue polypeptide: Beta-ketoacyl-[acyl-carrier-protein] synthase III (324 aa).

Residues Cys113 and His251 contribute to the active site. The tract at residues 252 to 256 (QANKR) is ACP-binding. Residue Asn281 is part of the active site.

It belongs to the thiolase-like superfamily. FabH family. Homodimer.

It is found in the cytoplasm. The catalysed reaction is malonyl-[ACP] + acetyl-CoA + H(+) = 3-oxobutanoyl-[ACP] + CO2 + CoA. It participates in lipid metabolism; fatty acid biosynthesis. Its function is as follows. Catalyzes the condensation reaction of fatty acid synthesis by the addition to an acyl acceptor of two carbons from malonyl-ACP. Catalyzes the first condensation reaction which initiates fatty acid synthesis and may therefore play a role in governing the total rate of fatty acid production. Possesses both acetoacetyl-ACP synthase and acetyl transacylase activities. Its substrate specificity determines the biosynthesis of branched-chain and/or straight-chain of fatty acids. The sequence is that of Beta-ketoacyl-[acyl-carrier-protein] synthase III from Bartonella tribocorum (strain CIP 105476 / IBS 506).